The following is a 476-amino-acid chain: MSKSALPKRLIEIPEMRRIKSIHFIGVGGAGMCGIAEVMKNQGYGVSGSDIKESPVTKRLQSLGIEVFIGHDSKNIANADVVVVSSAIDRENPEIQAALKAQLPVVRRADMLGELMRYRHGIAVAGAHGKTTTTSLLTMMMTEAGFDPTYVIGGKLNASGKNASLGESRYLIAEADESDASFLTLHPMAAIVTNIDQDHMDTYGNSFDKLKAAYIQFLQNMPFYGLAVVCGDDKELFDMIDDIGRPVLTFGLEPHNNVQATNVRVDGTKTHFTVLRKDREPLELTLNIPGQHNVLNALAAITMATDEGVNDDAIKRALAKFAGVGRRFEQQACVAKDDGDVLLIDDYGHHPVEVAATIKAARASYPERRLVMLFQPHRYSRTRDCYDDFVAVLSQVDVLLLLDVYSAGEAPIVGADTKSLARSIRLRGEVEPVVVDKDELAPVMQRVLQAGDMLITQGAGNVGQLSQQLAANNLYL.

Glycine 126–threonine 132 contributes to the ATP binding site.

This sequence belongs to the MurCDEF family.

It is found in the cytoplasm. The enzyme catalyses UDP-N-acetyl-alpha-D-muramate + L-alanine + ATP = UDP-N-acetyl-alpha-D-muramoyl-L-alanine + ADP + phosphate + H(+). It functions in the pathway cell wall biogenesis; peptidoglycan biosynthesis. Its function is as follows. Cell wall formation. This chain is UDP-N-acetylmuramate--L-alanine ligase, found in Psychrobacter sp. (strain PRwf-1).